We begin with the raw amino-acid sequence, 25 residues long: Oxyopinin-3c (25 aa).

As to expression, expressed by the venom gland.

It localises to the secreted. In terms of biological role, may have cytolytic and antimicrobial activity. This is Oxyopinin-3c from Oxyopes takobius (Lynx spider).